We begin with the raw amino-acid sequence, 353 residues long: Photosystem II D2 protein (353 aa).

N-acetylthreonine is present on T2. A Phosphothreonine modification is found at T2. The chain crosses the membrane as a helical span at residues 41–61 (CAYFALGGWFTGTTFVTSWYT). H118 contributes to the chlorophyll a binding site. The chain crosses the membrane as a helical span at residues 125-141 (GFMLRQFELARSVQLRP). Pheophytin a-binding residues include Q130 and N143. Residues 153–166 (VFVSVFLIYPLGQS) form a helical membrane-spanning segment. A chlorophyll a-binding site is contributed by H198. The chain crosses the membrane as a helical span at residues 208 to 228 (AALLCAIHGATVENTLFEDGD). Positions 215 and 262 each coordinate a plastoquinone. H215 contributes to the Fe cation binding site. H269 serves as a coordination point for Fe cation. A helical transmembrane segment spans residues 279–295 (GLWMSAIGVVGLALNLR).

The protein belongs to the reaction center PufL/M/PsbA/D family. PSII is composed of 1 copy each of membrane proteins PsbA, PsbB, PsbC, PsbD, PsbE, PsbF, PsbH, PsbI, PsbJ, PsbK, PsbL, PsbM, PsbT, PsbX, PsbY, PsbZ, Psb30/Ycf12, at least 3 peripheral proteins of the oxygen-evolving complex and a large number of cofactors. It forms dimeric complexes. The cofactor is The D1/D2 heterodimer binds P680, chlorophylls that are the primary electron donor of PSII, and subsequent electron acceptors. It shares a non-heme iron and each subunit binds pheophytin, quinone, additional chlorophylls, carotenoids and lipids. There is also a Cl(-1) ion associated with D1 and D2, which is required for oxygen evolution. The PSII complex binds additional chlorophylls, carotenoids and specific lipids..

It localises to the plastid. It is found in the chloroplast thylakoid membrane. The catalysed reaction is 2 a plastoquinone + 4 hnu + 2 H2O = 2 a plastoquinol + O2. In terms of biological role, photosystem II (PSII) is a light-driven water:plastoquinone oxidoreductase that uses light energy to abstract electrons from H(2)O, generating O(2) and a proton gradient subsequently used for ATP formation. It consists of a core antenna complex that captures photons, and an electron transfer chain that converts photonic excitation into a charge separation. The D1/D2 (PsbA/PsbD) reaction center heterodimer binds P680, the primary electron donor of PSII as well as several subsequent electron acceptors. D2 is needed for assembly of a stable PSII complex. The polypeptide is Photosystem II D2 protein (Cycas taitungensis (Prince sago)).